Reading from the N-terminus, the 535-residue chain is CTP synthase (535 aa).

Positions methionine 1–valine 267 are amidoligase domain. Serine 13 is a CTP binding site. UTP is bound at residue serine 13. Serine 14–isoleucine 19 contacts ATP. Position 54 (tyrosine 54) interacts with L-glutamine. Residue aspartate 71 coordinates ATP. Residues aspartate 71 and glutamate 141 each contribute to the Mg(2+) site. CTP-binding positions include aspartate 148 to glutamate 150, lysine 188 to glutamine 193, and lysine 224. Residues lysine 188–glutamine 193 and lysine 224 contribute to the UTP site. The region spanning lysine 292 to aspartate 535 is the Glutamine amidotransferase type-1 domain. Glycine 354 provides a ligand contact to L-glutamine. Cysteine 381 (nucleophile; for glutamine hydrolysis) is an active-site residue. L-glutamine is bound by residues leucine 382–glutamine 385, glutamate 405, and arginine 463. Catalysis depends on residues histidine 508 and glutamate 510.

Belongs to the CTP synthase family. As to quaternary structure, homotetramer.

The catalysed reaction is UTP + L-glutamine + ATP + H2O = CTP + L-glutamate + ADP + phosphate + 2 H(+). It carries out the reaction L-glutamine + H2O = L-glutamate + NH4(+). The enzyme catalyses UTP + NH4(+) + ATP = CTP + ADP + phosphate + 2 H(+). It participates in pyrimidine metabolism; CTP biosynthesis via de novo pathway; CTP from UDP: step 2/2. Allosterically activated by GTP, when glutamine is the substrate; GTP has no effect on the reaction when ammonia is the substrate. The allosteric effector GTP functions by stabilizing the protein conformation that binds the tetrahedral intermediate(s) formed during glutamine hydrolysis. Inhibited by the product CTP, via allosteric rather than competitive inhibition. In terms of biological role, catalyzes the ATP-dependent amination of UTP to CTP with either L-glutamine or ammonia as the source of nitrogen. Regulates intracellular CTP levels through interactions with the four ribonucleotide triphosphates. The sequence is that of CTP synthase from Levilactobacillus brevis (strain ATCC 367 / BCRC 12310 / CIP 105137 / JCM 1170 / LMG 11437 / NCIMB 947 / NCTC 947) (Lactobacillus brevis).